The sequence spans 130 residues: Small ribosomal subunit protein uS9 (130 aa).

This sequence belongs to the universal ribosomal protein uS9 family.

The polypeptide is Small ribosomal subunit protein uS9 (Bacillus mycoides (strain KBAB4) (Bacillus weihenstephanensis)).